Here is a 137-residue protein sequence, read N- to C-terminus: MFSNWDIFLNYKNFTINQEIKNKLDLYYQILIQENQKYNLTRITELNEVFEKHFLDSLLFVEQFQIIDQKIADIGTGAGFPGIVLKIFFPNIKLTLIESNNKKANFLKYLVQKLELNNVEILNKRAEELNEYKEHLI.

Residues Gly-75, Phe-80, and 126–127 each bind S-adenosyl-L-methionine; that span reads AE.

This sequence belongs to the methyltransferase superfamily. RNA methyltransferase RsmG family.

The protein resides in the cytoplasm. In terms of biological role, specifically methylates the N7 position of a guanine in 16S rRNA. This Mycoplasma mycoides subsp. mycoides SC (strain CCUG 32753 / NCTC 10114 / PG1) protein is Ribosomal RNA small subunit methyltransferase G.